The following is a 315-amino-acid chain: Tetraacyldisaccharide 4'-kinase (315 aa).

Residue 45 to 52 participates in ATP binding; that stretch reads SVGGSGKT.

It belongs to the LpxK family.

It catalyses the reaction a lipid A disaccharide + ATP = a lipid IVA + ADP + H(+). The protein operates within glycolipid biosynthesis; lipid IV(A) biosynthesis; lipid IV(A) from (3R)-3-hydroxytetradecanoyl-[acyl-carrier-protein] and UDP-N-acetyl-alpha-D-glucosamine: step 6/6. Functionally, transfers the gamma-phosphate of ATP to the 4'-position of a tetraacyldisaccharide 1-phosphate intermediate (termed DS-1-P) to form tetraacyldisaccharide 1,4'-bis-phosphate (lipid IVA). The protein is Tetraacyldisaccharide 4'-kinase of Aquifex aeolicus (strain VF5).